Reading from the N-terminus, the 1168-residue chain is DNA-directed RNA polymerase subunit beta (1168 aa).

This sequence belongs to the RNA polymerase beta chain family. The RNAP catalytic core consists of 2 alpha, 1 beta, 1 beta' and 1 omega subunit. When a sigma factor is associated with the core the holoenzyme is formed, which can initiate transcription.

It catalyses the reaction RNA(n) + a ribonucleoside 5'-triphosphate = RNA(n+1) + diphosphate. DNA-dependent RNA polymerase catalyzes the transcription of DNA into RNA using the four ribonucleoside triphosphates as substrates. The polypeptide is DNA-directed RNA polymerase subunit beta (Rhodococcus jostii (strain RHA1)).